A 121-amino-acid polypeptide reads, in one-letter code: Prefoldin subunit beta (121 aa).

It belongs to the prefoldin subunit beta family. In terms of assembly, heterohexamer of two alpha and four beta subunits.

The protein resides in the cytoplasm. Its function is as follows. Molecular chaperone capable of stabilizing a range of proteins. Seems to fulfill an ATP-independent, HSP70-like function in archaeal de novo protein folding. In Methanosphaerula palustris (strain ATCC BAA-1556 / DSM 19958 / E1-9c), this protein is Prefoldin subunit beta.